We begin with the raw amino-acid sequence, 500 residues long: L-arabinose isomerase (500 aa).

Mn(2+)-binding residues include Glu306, Glu333, His350, and His450.

It belongs to the arabinose isomerase family. Homohexamer. Mn(2+) is required as a cofactor.

It catalyses the reaction beta-L-arabinopyranose = L-ribulose. It participates in carbohydrate degradation; L-arabinose degradation via L-ribulose; D-xylulose 5-phosphate from L-arabinose (bacterial route): step 1/3. Catalyzes the conversion of L-arabinose to L-ribulose. The polypeptide is L-arabinose isomerase (Shigella flexneri serotype 5b (strain 8401)).